Reading from the N-terminus, the 426-residue chain is 5-aminovalerate aminotransferase DavT (426 aa).

Residues 112–113 (GS), Tyr139, and 240–243 (DEVQ) each bind pyridoxal 5'-phosphate. Lys269 is subject to N6-(pyridoxal phosphate)lysine. Thr298 provides a ligand contact to pyridoxal 5'-phosphate.

The protein belongs to the class-III pyridoxal-phosphate-dependent aminotransferase family. Pyridoxal 5'-phosphate is required as a cofactor.

The enzyme catalyses 5-aminopentanoate + 2-oxoglutarate = 5-oxopentanoate + L-glutamate. In terms of biological role, catalyzes the conversion of 5-aminovalerate to 5-oxopentanoate. This Pseudomonas aeruginosa (strain ATCC 15692 / DSM 22644 / CIP 104116 / JCM 14847 / LMG 12228 / 1C / PRS 101 / PAO1) protein is 5-aminovalerate aminotransferase DavT (davT).